We begin with the raw amino-acid sequence, 817 residues long: Transcription factor yanR (817 aa).

The segment at residues 19–46 is a DNA-binding region (zn(2)-C6 fungal-type); sequence CIVCRRRKVRCGREHPECANCVRMKENC. Disordered stretches follow at residues 102–161, 180–218, and 733–775; these read GNVL…PQVD, HHASSRAGTSRTSSVSQDASPAVSESARAPSTSTSYSGL, and SLSS…VADS. The span at 113 to 127 shows a compositional bias: pro residues; the sequence is LPRPTISPASAPPPQ. A compositionally biased stretch (polar residues) spans 146–158; it reads SSTILTPAPSSHP. Residues 184–195 show a composition bias toward low complexity; sequence SRAGTSRTSSVS. 2 stretches are compositionally biased toward polar residues: residues 208–217 and 748–760; these read APSTSTSYSG and EAPSTTTAPQMPS.

Its subcellular location is the nucleus. Its function is as follows. Transcription factor that regulates the expression of the gene cluster that mediates the biosynthesis of yanuthone D, a fungal isoprenoid epoxycyclohexenone that acts as an antibiotic against fungi and bacteria. This Aspergillus niger (strain ATCC 1015 / CBS 113.46 / FGSC A1144 / LSHB Ac4 / NCTC 3858a / NRRL 328 / USDA 3528.7) protein is Transcription factor yanR.